The following is a 1266-amino-acid chain: TBC1 domain family member 9 (1266 aa).

GRAM domains follow at residues 146–213 (VKFH…EKNA) and 293–361 (ERYR…EKAD). Positions 415–456 (SYNSSDDEVYSRPSSLVSSSPQRSTSSDADGERQFNLNGNSV) are disordered. Residues 425 to 441 (SRPSSLVSSSPQRSTSS) show a composition bias toward low complexity. Positions 515–702 (GIPESMRGEL…VVVDCFFYEG (188 aa)) constitute a Rab-GAP TBC domain. One can recognise an EF-hand domain in the interval 886-921 (HSDVLASRLFQLLDENGDSLINFREFVSGLSAACHG). Disordered regions lie at residues 1075–1095 (AKEG…PGVL) and 1132–1164 (DIKL…SMSS).

In terms of biological role, may act as a GTPase-activating protein for Rab family protein(s). This chain is TBC1 domain family member 9 (TBC1D9), found in Homo sapiens (Human).